The following is a 482-amino-acid chain: Rhamnulokinase (482 aa).

13-17 (ASSGR) is an ATP binding site. Residues Gly-83 and 232–234 (HDT) contribute to the substrate site. The Proton acceptor role is filled by Asp-233. ATP is bound at residue Thr-255. Asn-292 contacts substrate. Residue Asn-300 coordinates ATP. The cysteines at positions 349 and 366 are disulfide-linked. Gly-398 lines the ATP pocket. A disulfide bridge connects residues Cys-409 and Cys-413.

It belongs to the rhamnulokinase family. The cofactor is Mg(2+).

It catalyses the reaction L-rhamnulose + ATP = L-rhamnulose 1-phosphate + ADP + H(+). It participates in carbohydrate degradation; L-rhamnose degradation; glycerone phosphate from L-rhamnose: step 2/3. In terms of biological role, involved in the catabolism of L-rhamnose (6-deoxy-L-mannose). Catalyzes the transfer of the gamma-phosphate group from ATP to the 1-hydroxyl group of L-rhamnulose to yield L-rhamnulose 1-phosphate. This is Rhamnulokinase from Mannheimia succiniciproducens (strain KCTC 0769BP / MBEL55E).